The chain runs to 234 residues: MQTYSTPLTLIIVTSLFLFTTQGSSSNAVEPTKKPLKLANYRATCEDRTRTLVTRLNTSHHSVVWQRYDIYSRYMRRMPPLCIITDAYKETTHQGGATFTCTRQNLTLYNLTVKDTGVYLLQDQYTGDVEAFYLIIHPRSFCRALETRRCFYPGPGRVVVTDSQEADRAIISDLKRQWSGLSLHCAWVSGLMIFVGALVICFLRSQRIGEQDAEQLRTDLDTEPLLLTVDGDLE.

The first 23 residues, 1–23 (MQTYSTPLTLIIVTSLFLFTTQG), serve as a signal peptide directing secretion. Residues 183-203 (LHCAWVSGLMIFVGALVICFL) form a helical membrane-spanning segment.

The protein localises to the host membrane. The chain is Membrane glycoprotein RL11 (RL11) from Human cytomegalovirus (strain Merlin) (HHV-5).